The following is a 620-amino-acid chain: Chaperone protein HscA homolog (620 aa).

The protein belongs to the heat shock protein 70 family.

In terms of biological role, chaperone involved in the maturation of iron-sulfur cluster-containing proteins. Has a low intrinsic ATPase activity which is markedly stimulated by HscB. The sequence is that of Chaperone protein HscA homolog from Bordetella petrii (strain ATCC BAA-461 / DSM 12804 / CCUG 43448).